Here is a 218-residue protein sequence, read N- to C-terminus: MGKGNNMIPNQHYHKWWQRHVKTWFNQPARKVRRHANRVKKAKAVFPRPASGALRPVVRCPTIRYHTKLRAGRGFTLEELKGAGIGANFAKTIGIAVDRRRKNKSLESRQRNIQRLKEYRSKLILFPINEKKIRAGESSLEECKLATQLKGPVLPIKNEQPAVVEFREVTKDEKKFKAFATLRKARTDARLVGIRAKRAKEAAESEDAAKGDPKKAKK.

The interval A196–K218 is disordered. Residues A199 to K218 are compositionally biased toward basic and acidic residues.

The protein belongs to the eukaryotic ribosomal protein eL13 family. In terms of assembly, component of the 60S large ribosomal subunit (LSU).

It localises to the cytoplasm. In terms of biological role, component of the ribosome, a large ribonucleoprotein complex responsible for the synthesis of proteins in the cell. The small ribosomal subunit (SSU) binds messenger RNAs (mRNAs) and translates the encoded message by selecting cognate aminoacyl-transfer RNA (tRNA) molecules. The large subunit (LSU) contains the ribosomal catalytic site termed the peptidyl transferase center (PTC), which catalyzes the formation of peptide bonds, thereby polymerizing the amino acids delivered by tRNAs into a polypeptide chain. The nascent polypeptides leave the ribosome through a tunnel in the LSU and interact with protein factors that function in enzymatic processing, targeting, and the membrane insertion of nascent chains at the exit of the ribosomal tunnel. As part of the LSU, it is probably required for its formation and the maturation of rRNAs. This is Large ribosomal subunit protein eL13 (RpL13) from Drosophila melanogaster (Fruit fly).